The primary structure comprises 264 residues: Thymidylate synthase (264 aa).

DUMP is bound at residue Arg21. His51 contacts (6R)-5,10-methylene-5,6,7,8-tetrahydrofolate. Residue 126 to 127 (RR) participates in dUMP binding. Catalysis depends on Cys146, which acts as the Nucleophile. DUMP is bound by residues 166–169 (RSAD), Asn177, and 207–209 (HLY). Asp169 lines the (6R)-5,10-methylene-5,6,7,8-tetrahydrofolate pocket. Ser263 contributes to the (6R)-5,10-methylene-5,6,7,8-tetrahydrofolate binding site.

Belongs to the thymidylate synthase family. Bacterial-type ThyA subfamily. As to quaternary structure, homodimer.

It localises to the cytoplasm. The enzyme catalyses dUMP + (6R)-5,10-methylene-5,6,7,8-tetrahydrofolate = 7,8-dihydrofolate + dTMP. It participates in pyrimidine metabolism; dTTP biosynthesis. Functionally, catalyzes the reductive methylation of 2'-deoxyuridine-5'-monophosphate (dUMP) to 2'-deoxythymidine-5'-monophosphate (dTMP) while utilizing 5,10-methylenetetrahydrofolate (mTHF) as the methyl donor and reductant in the reaction, yielding dihydrofolate (DHF) as a by-product. This enzymatic reaction provides an intracellular de novo source of dTMP, an essential precursor for DNA biosynthesis. In Laribacter hongkongensis (strain HLHK9), this protein is Thymidylate synthase.